Here is a 375-residue protein sequence, read N- to C-terminus: Queuine tRNA-ribosyltransferase (375 aa).

The Proton acceptor role is filled by Asp89. Substrate-binding positions include 89–93, Asp143, Gln187, and Gly214; that span reads DSGGF. Residues 245-251 are RNA binding; that stretch reads GVGKPED. Asp264 functions as the Nucleophile in the catalytic mechanism. The tract at residues 269–273 is RNA binding; important for wobble base 34 recognition; sequence TRNAR. Zn(2+) is bound by residues Cys302, Cys304, Cys307, and His333.

It belongs to the queuine tRNA-ribosyltransferase family. Homodimer. Within each dimer, one monomer is responsible for RNA recognition and catalysis, while the other monomer binds to the replacement base PreQ1. The cofactor is Zn(2+).

It carries out the reaction 7-aminomethyl-7-carbaguanine + guanosine(34) in tRNA = 7-aminomethyl-7-carbaguanosine(34) in tRNA + guanine. It participates in tRNA modification; tRNA-queuosine biosynthesis. Functionally, catalyzes the base-exchange of a guanine (G) residue with the queuine precursor 7-aminomethyl-7-deazaguanine (PreQ1) at position 34 (anticodon wobble position) in tRNAs with GU(N) anticodons (tRNA-Asp, -Asn, -His and -Tyr). Catalysis occurs through a double-displacement mechanism. The nucleophile active site attacks the C1' of nucleotide 34 to detach the guanine base from the RNA, forming a covalent enzyme-RNA intermediate. The proton acceptor active site deprotonates the incoming PreQ1, allowing a nucleophilic attack on the C1' of the ribose to form the product. After dissociation, two additional enzymatic reactions on the tRNA convert PreQ1 to queuine (Q), resulting in the hypermodified nucleoside queuosine (7-(((4,5-cis-dihydroxy-2-cyclopenten-1-yl)amino)methyl)-7-deazaguanosine). In Salmonella enteritidis PT4 (strain P125109), this protein is Queuine tRNA-ribosyltransferase.